The following is a 405-amino-acid chain: Replication factor C large subunit (405 aa).

47–54 (GPPGVGKT) provides a ligand contact to ATP.

Belongs to the activator 1 small subunits family. RfcL subfamily. As to quaternary structure, heteromultimer composed of small subunits (RfcS) and large subunits (RfcL).

In terms of biological role, part of the RFC clamp loader complex which loads the PCNA sliding clamp onto DNA. The chain is Replication factor C large subunit from Saccharolobus islandicus (strain L.S.2.15 / Lassen #1) (Sulfolobus islandicus).